The sequence spans 456 residues: Putative F-box/FBD/LRR-repeat protein At1g66300 (456 aa).

The tract at residues 1–23 (MDEDGEKRVRTKRLCSPESSDKK) is disordered. Positions 28-74 (VDWVRDLPESLICHVLLNLSTKDVIKNCVLSTKWRYLWRYVPGLDLD) constitute an F-box domain. LRR repeat units follow at residues 136 to 163 (HLDL…KLCG), 185 to 210 (VKFA…TLCR), 234 to 260 (PNTM…TLSH), and 347 to 372 (FYED…VVGS). The 53-residue stretch at 377 to 429 (MERTSIISGHRCLLSSLEYVEIETPLTGEVFEMKLVSYLLENSPILKKLTIHL) folds into the FBD domain.

The polypeptide is Putative F-box/FBD/LRR-repeat protein At1g66300 (Arabidopsis thaliana (Mouse-ear cress)).